Reading from the N-terminus, the 135-residue chain is Holo-[acyl-carrier-protein] synthase (135 aa).

The Mg(2+) site is built by Asp7 and Glu57.

This sequence belongs to the P-Pant transferase superfamily. AcpS family. It depends on Mg(2+) as a cofactor.

It is found in the cytoplasm. The catalysed reaction is apo-[ACP] + CoA = holo-[ACP] + adenosine 3',5'-bisphosphate + H(+). In terms of biological role, transfers the 4'-phosphopantetheine moiety from coenzyme A to a Ser of acyl-carrier-protein. The protein is Holo-[acyl-carrier-protein] synthase of Corynebacterium glutamicum (strain R).